We begin with the raw amino-acid sequence, 197 residues long: Protein GrpE (197 aa).

Over residues 1–31 (MSDDTKKQDTAADAEVEKEMEGVPEHLRDDR) the composition is skewed to basic and acidic residues. A disordered region spans residues 1 to 48 (MSDDTKKQDTAADAEVEKEMEGVPEHLRDDRGSEEDASDDLSAALESL).

It belongs to the GrpE family. As to quaternary structure, homodimer.

The protein localises to the cytoplasm. Its function is as follows. Participates actively in the response to hyperosmotic and heat shock by preventing the aggregation of stress-denatured proteins, in association with DnaK and GrpE. It is the nucleotide exchange factor for DnaK and may function as a thermosensor. Unfolded proteins bind initially to DnaJ; upon interaction with the DnaJ-bound protein, DnaK hydrolyzes its bound ATP, resulting in the formation of a stable complex. GrpE releases ADP from DnaK; ATP binding to DnaK triggers the release of the substrate protein, thus completing the reaction cycle. Several rounds of ATP-dependent interactions between DnaJ, DnaK and GrpE are required for fully efficient folding. This is Protein GrpE from Erythrobacter litoralis (strain HTCC2594).